The sequence spans 169 residues: Inorganic pyrophosphatase (169 aa).

Substrate contacts are provided by lysine 20, arginine 34, and tyrosine 46. Residues aspartate 56, aspartate 61, and aspartate 93 each coordinate Mg(2+). Substrate is bound at residue tyrosine 130.

The protein belongs to the PPase family. As to quaternary structure, homohexamer. The cofactor is Mg(2+).

It is found in the cytoplasm. It carries out the reaction diphosphate + H2O = 2 phosphate + H(+). Functionally, catalyzes the hydrolysis of inorganic pyrophosphate (PPi) forming two phosphate ions. The polypeptide is Inorganic pyrophosphatase (Methanosarcina mazei (strain ATCC BAA-159 / DSM 3647 / Goe1 / Go1 / JCM 11833 / OCM 88) (Methanosarcina frisia)).